Reading from the N-terminus, the 405-residue chain is Serine/threonine-protein kinase SSN3 (405 aa).

The region spanning 40-350 (YEIIGYIAAG…ANDALLHPYF (311 aa)) is the Protein kinase domain. ATP contacts are provided by residues 46 to 54 (IAAGTYGRV) and Lys-71. Residue Asp-173 is the Proton acceptor of the active site. The interval 377-405 (DSDIKTMTYQGTKRGSQGGDNLHPRKKQK) is disordered. A compositionally biased stretch (polar residues) spans 381–391 (KTMTYQGTKRG).

The protein belongs to the protein kinase superfamily. CMGC Ser/Thr protein kinase family. CDC2/CDKX subfamily. As to quaternary structure, component of the srb8-11 complex, a regulatory module of the Mediator complex. It depends on Mg(2+) as a cofactor.

The protein localises to the nucleus. It catalyses the reaction L-seryl-[protein] + ATP = O-phospho-L-seryl-[protein] + ADP + H(+). It carries out the reaction L-threonyl-[protein] + ATP = O-phospho-L-threonyl-[protein] + ADP + H(+). The enzyme catalyses [DNA-directed RNA polymerase] + ATP = phospho-[DNA-directed RNA polymerase] + ADP + H(+). Component of the srb8-11 complex. The srb8-11 complex is a regulatory module of the Mediator complex which is itself dependent transcription. The srb8-11 complex may be involved in the transcriptional repression of a subset of genes regulated by Mediator. It may inhibit the association of the Mediator complex with RNA polymerase II to form the holoenzyme complex. The srb8-11 complex phosphorylates the C-terminal domain (CTD) of the largest subunit of RNA polymerase II. The chain is Serine/threonine-protein kinase SSN3 (SSN3) from Yarrowia lipolytica (strain CLIB 122 / E 150) (Yeast).